The chain runs to 207 residues: Imidazole glycerol phosphate synthase subunit HisH (207 aa).

One can recognise a Glutamine amidotransferase type-1 domain in the interval 1–206 (MMIVIGYDAG…KEYVYENTAR (206 aa)). Residue C79 is the Nucleophile of the active site. Active-site residues include H181 and E183.

Heterodimer of HisH and HisF.

It localises to the cytoplasm. The enzyme catalyses 5-[(5-phospho-1-deoxy-D-ribulos-1-ylimino)methylamino]-1-(5-phospho-beta-D-ribosyl)imidazole-4-carboxamide + L-glutamine = D-erythro-1-(imidazol-4-yl)glycerol 3-phosphate + 5-amino-1-(5-phospho-beta-D-ribosyl)imidazole-4-carboxamide + L-glutamate + H(+). The catalysed reaction is L-glutamine + H2O = L-glutamate + NH4(+). The protein operates within amino-acid biosynthesis; L-histidine biosynthesis; L-histidine from 5-phospho-alpha-D-ribose 1-diphosphate: step 5/9. Functionally, IGPS catalyzes the conversion of PRFAR and glutamine to IGP, AICAR and glutamate. The HisH subunit catalyzes the hydrolysis of glutamine to glutamate and ammonia as part of the synthesis of IGP and AICAR. The resulting ammonia molecule is channeled to the active site of HisF. In Streptococcus gordonii (strain Challis / ATCC 35105 / BCRC 15272 / CH1 / DL1 / V288), this protein is Imidazole glycerol phosphate synthase subunit HisH.